Reading from the N-terminus, the 653-residue chain is Biotin biosynthesis bifunctional protein BioWF (653 aa).

Arginine 278 contributes to the substrate binding site. Residue 365–366 (GY) participates in pyridoxal 5'-phosphate binding. Position 390 (histidine 390) interacts with substrate. Pyridoxal 5'-phosphate-binding positions include serine 436, 461-464 (DDAH), and 492-495 (TASK). Lysine 495 carries the post-translational modification N6-(pyridoxal phosphate)lysine.

This sequence in the N-terminal section; belongs to the BioW family. It in the C-terminal section; belongs to the class-II pyridoxal-phosphate-dependent aminotransferase family. BioF subfamily. Homodimer. Mg(2+) is required as a cofactor. The cofactor is pyridoxal 5'-phosphate.

The enzyme catalyses heptanedioate + ATP + CoA = 6-carboxyhexanoyl-CoA + AMP + diphosphate. The catalysed reaction is 6-carboxyhexanoyl-[ACP] + L-alanine + H(+) = (8S)-8-amino-7-oxononanoate + holo-[ACP] + CO2. It functions in the pathway metabolic intermediate metabolism; pimeloyl-CoA biosynthesis; pimeloyl-CoA from pimelate: step 1/1. It participates in cofactor biosynthesis; biotin biosynthesis. Its function is as follows. Catalyzes both the decarboxylative condensation of pimeloyl-[acyl-carrier protein] and L-alanine to produce 8-amino-7-oxononanoate (AON), [acyl-carrier protein], and carbon dioxide, and the transformation of pimelate into pimeloyl-CoA with concomitant hydrolysis of ATP to AMP. The sequence is that of Biotin biosynthesis bifunctional protein BioWF from Cutibacterium acnes (strain DSM 16379 / KPA171202) (Propionibacterium acnes).